Consider the following 137-residue polypeptide: Proofreading thioesterase EntH (137 aa).

Glu63 functions as the Nucleophile or proton acceptor in the catalytic mechanism.

Belongs to the thioesterase PaaI family. As to quaternary structure, homotetramer. Dimer of dimers. Interacts specifically with the aryl carrier protein (ArCP) domain of EntB.

It localises to the cytoplasm. The protein operates within siderophore biosynthesis; enterobactin biosynthesis. Functionally, required for optimal enterobactin synthesis. Acts as a proofreading enzyme that prevents EntB misacylation by hydrolyzing the thioester bound existing between EntB and wrongly charged molecules. This chain is Proofreading thioesterase EntH, found in Cronobacter turicensis (strain DSM 18703 / CCUG 55852 / LMG 23827 / z3032).